We begin with the raw amino-acid sequence, 549 residues long: Acetyl-coenzyme A transporter 1 (549 aa).

Residues 1-12 (MSPTISHKDSSR) are compositionally biased toward basic and acidic residues. The tract at residues 1–46 (MSPTISHKDSSRQRRPGNFSHSLDMKSGPLPPGGWDDSHLDSAGRE) is disordered. Residues 1–74 (MSPTISHKDS…PQSFRAELSS (74 aa)) are Cytoplasmic-facing. Ser-22 and Ser-42 each carry phosphoserine. A compositionally biased stretch (basic and acidic residues) spans 36–46 (DDSHLDSAGRE). Residues 75-95 (ILLLLFLYVLQGIPLGLAGSI) traverse the membrane as a helical segment. Residues 96–113 (PLILQSKNVSYTDQAFFS) are Extracellular-facing. N-linked (GlcNAc...) asparagine glycosylation occurs at Asn-103. The chain crosses the membrane as a helical span at residues 114-134 (FVFWPFSLKLLWAPLVDAVYV). Residues 135–141 (KNFGRRK) are Cytoplasmic-facing. A helical membrane pass occupies residues 142-162 (SWLVPTQYILGLFMIYLSTQV). Over 163-175 (DRLLGNTDDRTPD) the chain is Extracellular. The helical transmembrane segment at 176 to 196 (VIALTVAFFLFEFLAATQDIA) threads the bilayer. Residues 197 to 217 (VDGWALTMLSRENVGYASTCN) are Cytoplasmic-facing. Residues 218–238 (SVGQTAGYFLGNVLFLALESA) form a helical membrane-spanning segment. The Extracellular segment spans residues 239–256 (DFCNKYLRFQPQPRGIVT). Residues 257-277 (LSDFLFFWGTVFLITTTLVAL) form a helical membrane-spanning segment. The Cytoplasmic portion of the chain corresponds to 278 to 299 (LKKENEVSVVKEETQGITDTYK). The chain crosses the membrane as a helical span at residues 300–320 (LLFAIIKMPAVLTFCLLILTA). Residues 321–343 (KIGFSAADAVTGLKLVEEGVPKE) lie on the Extracellular side of the membrane. A helical membrane pass occupies residues 344–364 (HLALLAVPMVPLQIILPLIIS). Residues 365–378 (KYTAGPQPLNTFYK) are Cytoplasmic-facing. A helical membrane pass occupies residues 379-398 (AMPYRLLLGLEYALLVWWTP). Over 399–404 (KVEHQG) the chain is Extracellular. The chain crosses the membrane as a helical span at residues 405–425 (GFPIYYYIVVLLSYALHQVTV). The Cytoplasmic segment spans residues 426–508 (YSMYVSIMAF…LGGSCVTALD (83 aa)). Residues 509–529 (GYYVESIICVFIGFGWWFFLG) form a helical membrane-spanning segment. Topologically, residues 530-549 (PKFKKLQDEGSSSWKCKRNN) are extracellular.

The protein belongs to the SLC33A transporter family. Homodimerizes. As to expression, ubiquitous. Detected in heart, brain, placenta, lung, liver, skeletal muscle, kidney and pancreas. With strongest signals in pancreas.

The protein localises to the endoplasmic reticulum membrane. It carries out the reaction acetyl-CoA(in) = acetyl-CoA(out). In terms of biological role, acetyl-CoA transporter that mediates active acetyl-CoA import through the endoplasmic reticulum (ER) membrane into the ER lumen where specific ER-based acetyl-CoA:lysine acetyltransferases are responsible for the acetylation of ER-based protein substrates, such as BACE1. Necessary for O-acetylation of gangliosides. In Homo sapiens (Human), this protein is Acetyl-coenzyme A transporter 1.